A 215-amino-acid chain; its full sequence is Large ribosomal subunit protein uL16 (215 aa).

The protein belongs to the universal ribosomal protein uL16 family. Component of the large ribosomal subunit.

It is found in the cytoplasm. Its function is as follows. Component of the large ribosomal subunit. Plays a role in the formation of actively translating ribosomes. Plays a role in the embryonic brain development. The chain is Large ribosomal subunit protein uL16 from Danio rerio (Zebrafish).